The chain runs to 435 residues: MKTTYVNATIVTMNEQNEVIENGYIIVENDKIIDVNSGEFASDFEVDEVIDMKGKWVLPGLVNTHTHVVMSLLRGIGDDMLLQPWLETRIWPLESQFTPQIAVASTELGLLEMVKSGTTSFSDMFNPIGVDQDAIMETVSRSGMRAAVSRTLFSFGTKEDEKKAIEEAEKYVKRYYNESGMLTTMVAPHSPYTCSTELLEECARIAVENQTMVHIHLSETEREVRDIEAQYGKRPVEYAASCGLFKRSTVIAHGVVLNDNERAFLAEHDVRVAHNPNSNLKLGSGIANVKAMLEAGIKVGIATDSVASNNNLDMFEEMRIATLLQKGIHQDATALPVETALTLATKGAAEVIGMKQTGSLEVGKCADFITIDPSNKPHLQPADEVLSHLVYAASGKDISDVIINGKRVVWNGECKTLDEERIIFEASRYKRGLQR.

Positions 65 and 67 each coordinate Zn(2+). Residues E94, R150, and H189 each contribute to the substrate site. Residue H216 participates in Zn(2+) binding. Substrate contacts are provided by E219 and D304. Position 304 (D304) interacts with Zn(2+).

It belongs to the metallo-dependent hydrolases superfamily. MTA/SAH deaminase family. Zn(2+) is required as a cofactor.

It catalyses the reaction S-adenosyl-L-homocysteine + H2O + H(+) = S-inosyl-L-homocysteine + NH4(+). The enzyme catalyses S-methyl-5'-thioadenosine + H2O + H(+) = S-methyl-5'-thioinosine + NH4(+). Its function is as follows. Catalyzes the deamination of 5-methylthioadenosine and S-adenosyl-L-homocysteine into 5-methylthioinosine and S-inosyl-L-homocysteine, respectively. Is also able to deaminate adenosine. This Bacillus thuringiensis (strain Al Hakam) protein is 5-methylthioadenosine/S-adenosylhomocysteine deaminase.